The chain runs to 427 residues: Serine hydroxymethyltransferase (427 aa).

Position 120 to 122 (120 to 122 (GHI)) interacts with (6S)-5,6,7,8-tetrahydrofolate. The residue at position 226 (Lys226) is an N6-(pyridoxal phosphate)lysine.

The protein belongs to the SHMT family. In terms of assembly, homodimer. It depends on pyridoxal 5'-phosphate as a cofactor.

It is found in the cytoplasm. The protein operates within amino-acid biosynthesis; glycine biosynthesis; glycine from L-serine: step 1/1. Its function is as follows. Catalyzes the reversible interconversion of serine and glycine with a modified folate serving as the one-carbon carrier. Also exhibits a pteridine-independent aldolase activity toward beta-hydroxyamino acids, producing glycine and aldehydes, via a retro-aldol mechanism. The protein is Serine hydroxymethyltransferase of Pyrococcus furiosus (strain ATCC 43587 / DSM 3638 / JCM 8422 / Vc1).